The chain runs to 317 residues: Protoheme IX farnesyltransferase (317 aa).

8 helical membrane passes run 39-59 (VLYLVVYTGAAGLLVAPGGIN), 60-80 (PILGFTAILCIAMAAGAAGAI), 109-129 (GALAYGVALSALSVLLMWLAT), 131-151 (LLAAGLLAASIGFYVFIYTMW), 160-180 (IVIGGAAGAFPPVIGWAAATG), 184-204 (LLPVLLFAIIFFWTPPHFWAL), 249-269 (VLHLAGPVYGASAMVLGLAFV), and 297-317 (FKFSILYLFLIFGALVLDHLV).

Belongs to the UbiA prenyltransferase family. Protoheme IX farnesyltransferase subfamily.

The protein resides in the cell inner membrane. It carries out the reaction heme b + (2E,6E)-farnesyl diphosphate + H2O = Fe(II)-heme o + diphosphate. Its pathway is porphyrin-containing compound metabolism; heme O biosynthesis; heme O from protoheme: step 1/1. In terms of biological role, converts heme B (protoheme IX) to heme O by substitution of the vinyl group on carbon 2 of heme B porphyrin ring with a hydroxyethyl farnesyl side group. The chain is Protoheme IX farnesyltransferase from Acidiphilium cryptum (strain JF-5).